Here is a 453-residue protein sequence, read N- to C-terminus: Chromosomal replication initiator protein DnaA (453 aa).

The domain I, interacts with DnaA modulators stretch occupies residues 1 to 71 (MSEKEIWEKV…QAILFDVVGY (71 aa)). The tract at residues 71-114 (YEVKPHFITTEELANYSNNETATPKEATKPSTETTEDNHVLGRE) is domain II. A domain III, AAA+ region region spans residues 115–331 (QFNAHNTFDT…GALTRLLAYS (217 aa)). ATP contacts are provided by G159, G161, K162, and T163. Residues 332 to 453 (QLLGKPITTE…ENLEKEIRNV (122 aa)) form a domain IV, binds dsDNA region.

The protein belongs to the DnaA family. Oligomerizes as a right-handed, spiral filament on DNA at oriC.

It localises to the cytoplasm. Functionally, plays an essential role in the initiation and regulation of chromosomal replication. ATP-DnaA binds to the origin of replication (oriC) to initiate formation of the DNA replication initiation complex once per cell cycle. Binds the DnaA box (a 9 base pair repeat at the origin) and separates the double-stranded (ds)DNA. Forms a right-handed helical filament on oriC DNA; dsDNA binds to the exterior of the filament while single-stranded (ss)DNA is stabiized in the filament's interior. The ATP-DnaA-oriC complex binds and stabilizes one strand of the AT-rich DNA unwinding element (DUE), permitting loading of DNA polymerase. After initiation quickly degrades to an ADP-DnaA complex that is not apt for DNA replication. Binds acidic phospholipids. This is Chromosomal replication initiator protein DnaA from Staphylococcus aureus (strain MRSA252).